We begin with the raw amino-acid sequence, 1414 residues long: Alpha-(1-&gt;3)-arabinofuranosyltransferase (1414 aa).

Transmembrane regions (helical) follow at residues 57–77, 81–101, 128–148, 167–187, 203–223, 273–293, 302–322, 352–372, and 389–409; these read YLFP…PGWV, LWWA…AEAL, AISS…PVIL, VALM…AAVI, AWWL…LLML, STTA…GLAL, LITM…GGLG, LPLA…GSAP, and VAVA…AWTA. The 159-residue stretch at 687–845 folds into the F5/8 type C domain; the sequence is YPSDGADLVY…QYDASGFAHP (159 aa). The next 4 helical transmembrane spans lie at 1253 to 1273, 1297 to 1317, 1333 to 1353, and 1364 to 1384; these read VGLI…LIPV, ALVA…GAAM, VWDN…GSVL, and YVGH…FLAA. Residues 1393 to 1414 form a disordered region; that stretch reads PEPSEDGRSAKPEHTGASAHAG. Over residues 1394 to 1406 the composition is skewed to basic and acidic residues; it reads EPSEDGRSAKPEH.

It localises to the membrane. It carries out the reaction Adds an alpha-D-arabinofuranosyl group from trans,octacis-decaprenylphospho-beta-D-arabinofuranose at the 3-O-position of an alpha-(1-&gt;5)-arabinofuranan chain attached to a beta-(1-&gt;5)-galactofuranan chain.. Its pathway is cell wall biogenesis; cell wall polysaccharide biosynthesis. In terms of biological role, involved in the biosynthesis of the arabinogalactan (AG) region of the mycolylarabinogalactan-peptidoglycan (mAGP) complex, an essential component of the mycobacterial cell wall. Catalyzes the addition of an arabinofuranosyl (Araf) residue from the sugar donor decaprenyl-phospho-arabinose (DPA) on the C-3 of an alpha-(1-&gt;5)-linked Araf from the arabinan backbone of AG. In Mycolicibacterium smegmatis (strain ATCC 700084 / mc(2)155) (Mycobacterium smegmatis), this protein is Alpha-(1-&gt;3)-arabinofuranosyltransferase (aftD).